A 432-amino-acid polypeptide reads, in one-letter code: Adenosylhomocysteinase (432 aa).

Residue S2 is modified to N-acetylserine. Substrate is bound by residues T57, D131, and E156. Position 183 is a phosphoserine (S183). Residues 183–350 form an NAD binding region; the sequence is SVTKSKFDNL…EGRLVNLGCA (168 aa). The substrate site is built by K186 and D190. Residue K186 is modified to N6-(2-hydroxyisobutyryl)lysine. Y193 carries the post-translational modification Phosphotyrosine.

The protein belongs to the adenosylhomocysteinase family. As to quaternary structure, homotetramer. Interaction with AHCYL1. It depends on NAD(+) as a cofactor.

The protein localises to the cytoplasm. The protein resides in the melanosome. It localises to the nucleus. Its subcellular location is the endoplasmic reticulum. It carries out the reaction S-adenosyl-L-homocysteine + H2O = L-homocysteine + adenosine. It participates in amino-acid biosynthesis; L-homocysteine biosynthesis; L-homocysteine from S-adenosyl-L-homocysteine: step 1/1. In terms of biological role, catalyzes the hydrolysis of S-adenosyl-L-homocysteine to form adenosine and homocysteine. Binds copper ions. The polypeptide is Adenosylhomocysteinase (AHCY) (Bos taurus (Bovine)).